The sequence spans 501 residues: Probable cytochrome P450 508A4 (501 aa).

Residues 1–21 (MIMLIKVFVLLLVVYILHNSY) form a helical membrane-spanning segment. Cysteine 445 lines the heme pocket.

It belongs to the cytochrome P450 family. Heme is required as a cofactor.

It localises to the membrane. The chain is Probable cytochrome P450 508A4 (cyp508A4) from Dictyostelium discoideum (Social amoeba).